A 469-amino-acid polypeptide reads, in one-letter code: Argininosuccinate lyase (469 aa).

It belongs to the lyase 1 family. Argininosuccinate lyase subfamily.

The protein resides in the cytoplasm. It carries out the reaction 2-(N(omega)-L-arginino)succinate = fumarate + L-arginine. It participates in amino-acid biosynthesis; L-arginine biosynthesis; L-arginine from L-ornithine and carbamoyl phosphate: step 3/3. This is Argininosuccinate lyase from Novosphingobium aromaticivorans (strain ATCC 700278 / DSM 12444 / CCUG 56034 / CIP 105152 / NBRC 16084 / F199).